The primary structure comprises 802 residues: MKQYNPKEIESKWQNIWEERGVFHASNDKDKEKFYALIEFPYPSGQGLHVGHPRPYTALDVVSRKRRLEGYNVLYPMGWDAFGLPTENYAIKNKIHPKVVTEQNVARFKKQLQGLGMSFDWSREINTTDPEYYKWTQWIFLKLFEKGLAYKKEMSINWCTSCKVGLANEEVVNGGCERCGAEVVRKQKNQWMLKITEYAERLINDLDLVDYIERVKIQQKNWIGKSEGMEVDFEITGGKKITVYTTRPDTLFGSTYMVISPEHPYIEELAAHIQNMDDLVHYREEAAKKSEFERTELVKDKTGVKIEGIEATNPATGKQIPIFISDYVMMSYGTGAIMAVPGHDTRDWEFAKKFNLPIVEVVSGGNVDEAAYTDTEEGIIVNSDFINGMQVKEAKEKISSWLEEKGLGKRKVNYKLRDWVFSRQRYWGEPIPLVHCDCCGWVPVPESQLPVLLPEVESYEPTDNGESPLANLRDWVETTCPKCGGKAERETDTMPQWAGSSWYFLRYTDPHNNEELASKENLDYWMPIDWYNGGMEHTTLHLLYSRFWHKFLYDCGVVPSCEPYQKRTSHGMILGENNEKMSKSRGNVINPDDIVTEFGADTLRLYEMFIGDFEKSVPWSQNGVKGCRRFLDRIWKLQEILVDSQEMTKELEGNIHKTIKKVTEDYETLKFNTAVASMMALINDFYDHGTVTKGDMKTLLTLLNPVAPHITEELWEVLGFEGHIYGTTWPIWDEAKTIDSVVEIPIQINGKVKGQMVISVDFTADQVKEQFRNDERLMALVEGKSIVKEIYVPGKIYNIVVK.

The 'HIGH' region motif lies at 41-52; sequence PYPSGQGLHVGH. Positions 580 to 584 match the 'KMSKS' region motif; sequence KMSKS. Residue K583 coordinates ATP.

This sequence belongs to the class-I aminoacyl-tRNA synthetase family.

It is found in the cytoplasm. It catalyses the reaction tRNA(Leu) + L-leucine + ATP = L-leucyl-tRNA(Leu) + AMP + diphosphate. This is Leucine--tRNA ligase from Alkaliphilus oremlandii (strain OhILAs) (Clostridium oremlandii (strain OhILAs)).